We begin with the raw amino-acid sequence, 807 residues long: Probable phosphoketolase (807 aa).

The protein belongs to the XFP family. Thiamine diphosphate is required as a cofactor.

The chain is Probable phosphoketolase from Mesorhizobium japonicum (strain LMG 29417 / CECT 9101 / MAFF 303099) (Mesorhizobium loti (strain MAFF 303099)).